A 264-amino-acid polypeptide reads, in one-letter code: ATP synthase subunit a (264 aa).

The next 7 helical transmembrane spans lie at 30 to 50, 90 to 110, 111 to 131, 134 to 154, 177 to 197, 208 to 228, and 235 to 255; these read WNID…WLFY, IAPL…MDMI, PVDW…KVVP, DVNI…YYSI, IPVN…SLAL, LIFI…ALGV, and LIFH…LTIV.

This sequence belongs to the ATPase A chain family. In terms of assembly, F-type ATPases have 2 components, CF(1) - the catalytic core - and CF(0) - the membrane proton channel. CF(1) has five subunits: alpha(3), beta(3), gamma(1), delta(1), epsilon(1). CF(0) has three main subunits: a(1), b(2) and c(9-12). The alpha and beta chains form an alternating ring which encloses part of the gamma chain. CF(1) is attached to CF(0) by a central stalk formed by the gamma and epsilon chains, while a peripheral stalk is formed by the delta and b chains.

The protein resides in the cell inner membrane. In terms of biological role, key component of the proton channel; it plays a direct role in the translocation of protons across the membrane. The chain is ATP synthase subunit a from Shewanella frigidimarina (strain NCIMB 400).